The following is a 407-amino-acid chain: Elongation factor Tu (407 aa).

Residues 10 to 217 enclose the tr-type G domain; sequence KPHVNVGTIG…ALDSYIPEPE (208 aa). The interval 19-26 is G1; sequence GHVDHGKT. 19–26 provides a ligand contact to GTP; it reads GHVDHGKT. T26 contacts Mg(2+). The tract at residues 60 to 64 is G2; sequence GITIA. The interval 81–84 is G3; sequence DCPG. Residues 81–85 and 136–139 each bind GTP; these read DCPGH and NKAD. The tract at residues 136–139 is G4; the sequence is NKAD. The tract at residues 184-186 is G5; that stretch reads SAL.

Belongs to the TRAFAC class translation factor GTPase superfamily. Classic translation factor GTPase family. EF-Tu/EF-1A subfamily. As to quaternary structure, monomer.

The protein localises to the cytoplasm. The catalysed reaction is GTP + H2O = GDP + phosphate + H(+). GTP hydrolase that promotes the GTP-dependent binding of aminoacyl-tRNA to the A-site of ribosomes during protein biosynthesis. The polypeptide is Elongation factor Tu (Saccharophagus degradans (strain 2-40 / ATCC 43961 / DSM 17024)).